A 493-amino-acid chain; its full sequence is Glutamyl-tRNA(Gln) amidotransferase subunit A (493 aa).

Residues lysine 79 and serine 159 each act as charge relay system in the active site. Residue serine 183 is the Acyl-ester intermediate of the active site.

It belongs to the amidase family. GatA subfamily. In terms of assembly, heterotrimer of A, B and C subunits.

The catalysed reaction is L-glutamyl-tRNA(Gln) + L-glutamine + ATP + H2O = L-glutaminyl-tRNA(Gln) + L-glutamate + ADP + phosphate + H(+). In terms of biological role, allows the formation of correctly charged Gln-tRNA(Gln) through the transamidation of misacylated Glu-tRNA(Gln) in organisms which lack glutaminyl-tRNA synthetase. The reaction takes place in the presence of glutamine and ATP through an activated gamma-phospho-Glu-tRNA(Gln). The chain is Glutamyl-tRNA(Gln) amidotransferase subunit A from Sinorhizobium fredii (strain NBRC 101917 / NGR234).